The primary structure comprises 344 residues: Gas vesicle ATPase GvpN2 (344 aa).

The segment at 1-55 (MTDTSRNRKVRGSKIRSSRSDKRQSRGSEDKELKRLADARDTDSEQAGDRVGDAF) is disordered. The segment covering 7–17 (NRKVRGSKIRS) has biased composition (basic residues). The segment covering 18 to 52 (SRSDKRQSRGSEDKELKRLADARDTDSEQAGDRVG) has biased composition (basic and acidic residues). ATP is bound at residue 89 to 96 (GPTGCGKT).

Belongs to the CbbQ/NirQ/NorQ/GpvN family. Forms homodimers, a GvpN-GvpO heterodimer, interacts with GvpC and GvpL, might interact with GvpA.

Its subcellular location is the gas vesicle. The protein localises to the cytoplasm. The catalysed reaction is ATP + H2O = ADP + phosphate + H(+). Functionally, an ATPase that functions in gas vesicle formation. A minor component of the gas vesicle, also found in soluble extracts. Gas vesicles are hollow, gas filled proteinaceous nanostructures found in several microbial planktonic microorganisms. They allow positioning of halobacteria at the optimal depth for growth in the poorly aerated, shallow brine pools of their habitat. Expression of 2 c-vac DNA fragments containing 2 divergently transcribed regions (gvpE-gvpF-gvpG-gvpH-gvpI-gvpJ-gvpK-gvpL-gvpM and gvpA-gvpC-gvpN-gvpO) allows H.volcanii to produce gas vesicles. The polypeptide is Gas vesicle ATPase GvpN2 (Halobacterium salinarum (strain ATCC 700922 / JCM 11081 / NRC-1) (Halobacterium halobium)).